The sequence spans 105 residues: ATP-dependent Clp protease adapter protein ClpS (105 aa).

This sequence belongs to the ClpS family. Binds to the N-terminal domain of the chaperone ClpA.

Involved in the modulation of the specificity of the ClpAP-mediated ATP-dependent protein degradation. The chain is ATP-dependent Clp protease adapter protein ClpS from Streptomyces avermitilis (strain ATCC 31267 / DSM 46492 / JCM 5070 / NBRC 14893 / NCIMB 12804 / NRRL 8165 / MA-4680).